We begin with the raw amino-acid sequence, 316 residues long: MTTAALQTQLQGYLDYLIIERSIAANTLSSYRRDLIRYSKHLSDRGIEDLAKVGEHDVSEFLVALRRGDPDSGVAALSAVSAARALIAVRGLHRFAVAEGLVDLDVARAVRPPTPGRRLPKSLTVDEVLALLESVGGESRADGPLVLRNRALLELLYSTGSRISEAVGLDVDDVDTQARTVLLQGKGGKQRLVPVGRPAVQALDAYLVRGRSDLARRGPGMLATPAIFLNARGGRLSRQSAWQVLQDAAEHAGITSGVSPHMLRHSFATHLLEGGADIRVVQELMGHASVTTTQIYTLVTVQALREVWAGAHPRAK.

One can recognise a Core-binding (CB) domain in the interval 4 to 97 (AALQTQLQGY…AVRGLHRFAV (94 aa)). Residues 118 to 309 (RLPKSLTVDE…TVQALREVWA (192 aa)) enclose the Tyr recombinase domain. Active-site residues include Arg162, Lys186, His261, Arg264, and His287. Tyr296 functions as the O-(3'-phospho-DNA)-tyrosine intermediate in the catalytic mechanism.

It belongs to the 'phage' integrase family. XerD subfamily. In terms of assembly, forms a cyclic heterotetrameric complex composed of two molecules of XerC and two molecules of XerD.

It is found in the cytoplasm. Site-specific tyrosine recombinase, which acts by catalyzing the cutting and rejoining of the recombining DNA molecules. The XerC-XerD complex is essential to convert dimers of the bacterial chromosome into monomers to permit their segregation at cell division. It also contributes to the segregational stability of plasmids. The chain is Tyrosine recombinase XerD from Mycobacterium leprae (strain TN).